A 384-amino-acid polypeptide reads, in one-letter code: 1-deoxy-D-xylulose 5-phosphate reductoisomerase (384 aa).

NADPH-binding residues include T10, G11, S12, I13, G36, K37, N38, and N121. K122 is a binding site for 1-deoxy-D-xylulose 5-phosphate. Residue E123 coordinates NADPH. D147 provides a ligand contact to Mn(2+). 1-deoxy-D-xylulose 5-phosphate-binding residues include S148, E149, S173, and H196. E149 contacts Mn(2+). G202 provides a ligand contact to NADPH. 1-deoxy-D-xylulose 5-phosphate-binding residues include S209, N214, K215, and E218. Residue E218 coordinates Mn(2+).

It belongs to the DXR family. Mg(2+) serves as cofactor. Requires Mn(2+) as cofactor.

It catalyses the reaction 2-C-methyl-D-erythritol 4-phosphate + NADP(+) = 1-deoxy-D-xylulose 5-phosphate + NADPH + H(+). The protein operates within isoprenoid biosynthesis; isopentenyl diphosphate biosynthesis via DXP pathway; isopentenyl diphosphate from 1-deoxy-D-xylulose 5-phosphate: step 1/6. In terms of biological role, catalyzes the NADPH-dependent rearrangement and reduction of 1-deoxy-D-xylulose-5-phosphate (DXP) to 2-C-methyl-D-erythritol 4-phosphate (MEP). In Exiguobacterium sibiricum (strain DSM 17290 / CCUG 55495 / CIP 109462 / JCM 13490 / 255-15), this protein is 1-deoxy-D-xylulose 5-phosphate reductoisomerase.